A 351-amino-acid polypeptide reads, in one-letter code: uncharacterized protein (351 aa).

Residues Asp215, Asp226, His290, Glu319, and Glu333 each contribute to the Mn(2+) site.

Belongs to the peptidase M24B family. It depends on Mn(2+) as a cofactor.

This is an uncharacterized protein from Staphylococcus aureus (strain MSSA476).